Here is a 151-residue protein sequence, read N- to C-terminus: S-ribosylhomocysteine lyase (151 aa).

Residues His-54, His-58, and Cys-121 each coordinate Fe cation.

This sequence belongs to the LuxS family. In terms of assembly, homodimer. Fe cation serves as cofactor.

It carries out the reaction S-(5-deoxy-D-ribos-5-yl)-L-homocysteine = (S)-4,5-dihydroxypentane-2,3-dione + L-homocysteine. Involved in the synthesis of autoinducer 2 (AI-2) which is secreted by bacteria and is used to communicate both the cell density and the metabolic potential of the environment. The regulation of gene expression in response to changes in cell density is called quorum sensing. Catalyzes the transformation of S-ribosylhomocysteine (RHC) to homocysteine (HC) and 4,5-dihydroxy-2,3-pentadione (DPD). The chain is S-ribosylhomocysteine lyase from Clostridioides difficile (strain 630) (Peptoclostridium difficile).